Here is a 958-residue protein sequence, read N- to C-terminus: Glycine dehydrogenase (decarboxylating) (958 aa).

Lys-707 is modified (N6-(pyridoxal phosphate)lysine).

This sequence belongs to the GcvP family. In terms of assembly, the glycine cleavage system is composed of four proteins: P, T, L and H. Pyridoxal 5'-phosphate is required as a cofactor.

It carries out the reaction N(6)-[(R)-lipoyl]-L-lysyl-[glycine-cleavage complex H protein] + glycine + H(+) = N(6)-[(R)-S(8)-aminomethyldihydrolipoyl]-L-lysyl-[glycine-cleavage complex H protein] + CO2. Its function is as follows. The glycine cleavage system catalyzes the degradation of glycine. The P protein binds the alpha-amino group of glycine through its pyridoxal phosphate cofactor; CO(2) is released and the remaining methylamine moiety is then transferred to the lipoamide cofactor of the H protein. The polypeptide is Glycine dehydrogenase (decarboxylating) (Stutzerimonas stutzeri (strain A1501) (Pseudomonas stutzeri)).